The sequence spans 591 residues: Aspartate--tRNA(Asp/Asn) ligase (591 aa).

L-aspartate is bound at residue glutamate 170. The aspartate stretch occupies residues 194–197; it reads QLFK. Arginine 216 contributes to the L-aspartate binding site. ATP is bound by residues 216 to 218 and glutamine 225; that span reads RDE. Histidine 448 contacts L-aspartate. Position 482 (glutamate 482) interacts with ATP. L-aspartate is bound at residue arginine 489. Position 534–537 (534–537) interacts with ATP; the sequence is GWDR. The tract at residues 559–591 is disordered; that stretch reads GGVDPLTDAPAPITEQQRKESGIDVKPEPSKPH. Over residues 574–591 the composition is skewed to basic and acidic residues; it reads QQRKESGIDVKPEPSKPH.

The protein belongs to the class-II aminoacyl-tRNA synthetase family. Type 1 subfamily. Homodimer.

It is found in the cytoplasm. The catalysed reaction is tRNA(Asx) + L-aspartate + ATP = L-aspartyl-tRNA(Asx) + AMP + diphosphate. Functionally, aspartyl-tRNA synthetase with relaxed tRNA specificity since it is able to aspartylate not only its cognate tRNA(Asp) but also tRNA(Asn). Reaction proceeds in two steps: L-aspartate is first activated by ATP to form Asp-AMP and then transferred to the acceptor end of tRNA(Asp/Asn). The chain is Aspartate--tRNA(Asp/Asn) ligase from Mycobacterium avium (strain 104).